We begin with the raw amino-acid sequence, 291 residues long: Protease HtpX homolog (291 aa).

2 helical membrane-spanning segments follow: residues Val-4 to Val-24 and Met-38 to Leu-58. His-144 provides a ligand contact to Zn(2+). Glu-145 is an active-site residue. His-148 contributes to the Zn(2+) binding site. 2 consecutive transmembrane segments (helical) span residues Leu-159–Ile-179 and Ile-199–Phe-219. Glu-224 provides a ligand contact to Zn(2+).

The protein belongs to the peptidase M48B family. It depends on Zn(2+) as a cofactor.

It localises to the cell inner membrane. This is Protease HtpX homolog from Chlorobium phaeobacteroides (strain DSM 266 / SMG 266 / 2430).